The sequence spans 833 residues: DNA ligase (833 aa).

Residues 35–39, 84–85, and glutamate 115 contribute to the NAD(+) site; these read DADYD and SL. Residue lysine 117 is the N6-AMP-lysine intermediate of the active site. Arginine 138, glutamate 175, lysine 292, and lysine 316 together coordinate NAD(+). Zn(2+) contacts are provided by cysteine 410, cysteine 413, cysteine 428, and cysteine 434. Positions 750–833 constitute a BRCT domain; sequence LQTGPLDGQT…AFLGDHGQQP (84 aa).

The protein belongs to the NAD-dependent DNA ligase family. LigA subfamily. It depends on Mg(2+) as a cofactor. Requires Mn(2+) as cofactor.

It catalyses the reaction NAD(+) + (deoxyribonucleotide)n-3'-hydroxyl + 5'-phospho-(deoxyribonucleotide)m = (deoxyribonucleotide)n+m + AMP + beta-nicotinamide D-nucleotide.. Its function is as follows. DNA ligase that catalyzes the formation of phosphodiester linkages between 5'-phosphoryl and 3'-hydroxyl groups in double-stranded DNA using NAD as a coenzyme and as the energy source for the reaction. It is essential for DNA replication and repair of damaged DNA. The sequence is that of DNA ligase from Xanthomonas euvesicatoria pv. vesicatoria (strain 85-10) (Xanthomonas campestris pv. vesicatoria).